Here is a 428-residue protein sequence, read N- to C-terminus: Mitochondrial distribution and morphology protein 12 (428 aa).

Residues 1–387 (MSFDINWNQL…WPSWICIDMN (387 aa)) enclose the SMP-LTD domain. Disordered stretches follow at residues 75–168 (VMNE…APPL) and 387–428 (NDDD…EAGE). Over residues 81 to 96 (NDSKDEHLKNHGDGIN) the composition is skewed to basic and acidic residues. The span at 106–133 (LDDEDEDDEDDDEDDEDEEEEDEDDYDD) shows a compositional bias: acidic residues. The segment covering 146 to 161 (LNFNENSTTPSANSFA) has biased composition (polar residues). Over residues 387-403 (NDDDDEEEEEEESEDND) the composition is skewed to acidic residues. Residues 412-428 (NDGKHGDGRTDETEAGE) show a composition bias toward basic and acidic residues.

Belongs to the MDM12 family. As to quaternary structure, component of the ER-mitochondria encounter structure (ERMES) or MDM complex, composed of MMM1, MDM10, MDM12 and MDM34. An MMM1 homodimer associates with one molecule of MDM12 on each side in a pairwise head-to-tail manner, and the SMP-LTD domains of MMM1 and MDM12 generate a continuous hydrophobic tunnel for phospholipid trafficking.

It localises to the mitochondrion outer membrane. The protein resides in the endoplasmic reticulum membrane. In terms of biological role, component of the ERMES/MDM complex, which serves as a molecular tether to connect the endoplasmic reticulum (ER) and mitochondria. Components of this complex are involved in the control of mitochondrial shape and protein biogenesis, and function in nonvesicular lipid trafficking between the ER and mitochondria. MDM12 is required for the interaction of the ER-resident membrane protein MMM1 and the outer mitochondrial membrane-resident beta-barrel protein MDM10. The MDM12-MMM1 subcomplex functions in the major beta-barrel assembly pathway that is responsible for biogenesis of all mitochondrial outer membrane beta-barrel proteins, and acts in a late step after the SAM complex. The MDM10-MDM12-MMM1 subcomplex further acts in the TOM40-specific pathway after the action of the MDM12-MMM1 complex. Essential for establishing and maintaining the structure of mitochondria and maintenance of mtDNA nucleoids. The protein is Mitochondrial distribution and morphology protein 12 of Candida albicans (strain SC5314 / ATCC MYA-2876) (Yeast).